The sequence spans 264 residues: Phosphonates import ATP-binding protein PhnC (264 aa).

Residues 7–254 enclose the ABC transporter domain; the sequence is LSIRAASKTF…KLIDIYGPEF (248 aa). 39 to 46 is an ATP binding site; that stretch reads GPSGSGKS.

The protein belongs to the ABC transporter superfamily. Phosphonates importer (TC 3.A.1.9.1) family. In terms of assembly, the complex is composed of two ATP-binding proteins (PhnC), two transmembrane proteins (PhnE) and a solute-binding protein (PhnD).

It is found in the cell inner membrane. The enzyme catalyses phosphonate(out) + ATP + H2O = phosphonate(in) + ADP + phosphate + H(+). Its function is as follows. Part of the ABC transporter complex PhnCDE involved in phosphonates import. Responsible for energy coupling to the transport system. The sequence is that of Phosphonates import ATP-binding protein PhnC from Caulobacter vibrioides (strain ATCC 19089 / CIP 103742 / CB 15) (Caulobacter crescentus).